The following is a 238-amino-acid chain: Zinc import ATP-binding protein ZnuC (238 aa).

Residues 5 to 220 form the ABC transporter domain; that stretch reads IQLNNISVNF…SEFIAIFGNI (216 aa). 37 to 44 contributes to the ATP binding site; that stretch reads GPNGAGKS.

This sequence belongs to the ABC transporter superfamily. Zinc importer (TC 3.A.1.15.5) family. As to quaternary structure, the complex is composed of two ATP-binding proteins (ZnuC), two transmembrane proteins (ZnuB) and a solute-binding protein (ZnuA).

The protein resides in the cell membrane. It catalyses the reaction Zn(2+)(out) + ATP(in) + H2O(in) = Zn(2+)(in) + ADP(in) + phosphate(in) + H(+)(in). Its function is as follows. Part of the ABC transporter complex ZnuABC involved in zinc import. Responsible for energy coupling to the transport system. This Buchnera aphidicola subsp. Baizongia pistaciae (strain Bp) protein is Zinc import ATP-binding protein ZnuC.